Reading from the N-terminus, the 93-residue chain is Large ribosomal subunit protein uL23cz/uL23cy (93 aa).

Belongs to the universal ribosomal protein uL23 family. As to quaternary structure, part of the 50S ribosomal subunit.

It localises to the plastid. The protein resides in the chloroplast. Its function is as follows. Binds to 23S rRNA. This Arabidopsis thaliana (Mouse-ear cress) protein is Large ribosomal subunit protein uL23cz/uL23cy (rpl23-A).